Here is a 426-residue protein sequence, read N- to C-terminus: Histidine--tRNA ligase (426 aa).

The protein belongs to the class-II aminoacyl-tRNA synthetase family. In terms of assembly, homodimer.

It is found in the cytoplasm. It catalyses the reaction tRNA(His) + L-histidine + ATP = L-histidyl-tRNA(His) + AMP + diphosphate + H(+). The protein is Histidine--tRNA ligase of Legionella pneumophila (strain Lens).